The sequence spans 180 residues: Translation initiation factor IF-3 (180 aa).

Belongs to the IF-3 family. Monomer.

The protein resides in the cytoplasm. IF-3 binds to the 30S ribosomal subunit and shifts the equilibrium between 70S ribosomes and their 50S and 30S subunits in favor of the free subunits, thus enhancing the availability of 30S subunits on which protein synthesis initiation begins. The sequence is that of Translation initiation factor IF-3 from Xylella fastidiosa (strain Temecula1 / ATCC 700964).